A 226-amino-acid polypeptide reads, in one-letter code: MVAPLAVDIDGTLTRPDKSIDPRVFDAIRAWDDHVVIATGKSFPYPVGLCEFLGMPLNVIAENGGAVYVEPAGEVVYNGDPEGAAAVAEEYVAAGYDLGWGAVDMVNRWRETELAVDRDQPLEPLVAIADDHGMDVVDTGYAYHVKDAGVDKATGLETVAELLGVVPSSFIAIGDSENDAELLELAGTGFAVANADAHARGAADAVTDASFADGFLEALDRARDNR.

The active-site Nucleophile is Asp8. Asp8 and Asp10 together coordinate Mg(2+). Lys152 is a binding site for substrate. Mg(2+)-binding residues include Asp175 and Asp179.

The protein belongs to the archaeal SPP-like hydrolase family. It depends on Mg(2+) as a cofactor.

It catalyses the reaction 2-phosphoglycolate + H2O = glycolate + phosphate. In terms of biological role, catalyzes the dephosphorylation of 2-phosphoglycolate. This chain is Phosphoglycolate phosphatase, found in Natronomonas pharaonis (strain ATCC 35678 / DSM 2160 / CIP 103997 / JCM 8858 / NBRC 14720 / NCIMB 2260 / Gabara) (Halobacterium pharaonis).